The chain runs to 736 residues: Probable methionine--tRNA ligase, cytoplasmic (736 aa).

Residues 25–35 (PYVNNVPHLGN) carry the 'HIGH' region motif. A 'KMSKS' region motif is present at residues 346-350 (KFSKS). Position 349 (lysine 349) interacts with ATP. The region spanning 573–680 (PEFPIDMKIA…QSIEAGSKIA (108 aa)) is the tRNA-binding domain.

The protein belongs to the class-I aminoacyl-tRNA synthetase family.

The protein resides in the cytoplasm. It carries out the reaction tRNA(Met) + L-methionine + ATP = L-methionyl-tRNA(Met) + AMP + diphosphate. This Dictyostelium discoideum (Social amoeba) protein is Probable methionine--tRNA ligase, cytoplasmic (metS).